An 858-amino-acid polypeptide reads, in one-letter code: Tetratricopeptide repeat protein 7A (858 aa).

Ser-51 carries the phosphoserine modification. TPR repeat units follow at residues 121–157, 177–210, 414–447, 497–531, 533–565, and 566–599; these read CEAM…MENK, ERLP…AQVF, FHLW…RPSD, YSLQ…APSD, QVIL…RKDD, and AHAL…HPEN. A Phosphoserine modification is found at Ser-182. Phosphoserine is present on residues Ser-647, Ser-678, Ser-679, and Ser-690. Residue Thr-693 is modified to Phosphothreonine. 3 TPR repeats span residues 745-778, 780-812, and 813-846; these read HSVL…NPDG, RIMH…QSTC, and HEAW…EASS.

Component of a phosphatidylinositol 4-kinase (PI4K) complex, composed of PI4KA, EFR3 (EFR3A or EFR3B), TTC7 (TTC7A or TTC7B) and HYCC (HYCC1 or HYCC2). Interacts with PI4KA. Interaction with PI4KA is direct. Interacts with EFR3 (EFR3A or EFR3B), interaction is direct. Interacts with HYCC (HYCC1 or HYCC2), interaction is direct. Association with the PI4K complex is strongly reduced by TMEM150A. In terms of tissue distribution, expressed in epithelial cells of the intestine, thymus, and pancreas (at protein level).

The protein resides in the cytoplasm. It localises to the cell membrane. Component of a complex required to localize phosphatidylinositol 4-kinase (PI4K) to the plasma membrane. The complex acts as a regulator of phosphatidylinositol 4-phosphate (PtdIns(4)P) synthesis. In the complex, plays a central role in bridging PI4KA to EFR3B and HYCC1, via direct interactions. This is Tetratricopeptide repeat protein 7A from Homo sapiens (Human).